The sequence spans 284 residues: Proteasome subunit beta 1 (284 aa).

Positions 1-56 are cleaved as a propeptide — removed in mature form; by autocatalysis; that stretch reads MASHDSYTGRLPGAFMNPGTSSFTEFLASYNPDLLPGRHMTALAGGMPGNVEAPHA. The Nucleophile role is filled by Thr57.

The protein belongs to the peptidase T1B family. In terms of assembly, the 20S proteasome core is composed of 14 alpha and 14 beta subunits that assemble into four stacked heptameric rings, resulting in a barrel-shaped structure. The two inner rings, each composed of seven catalytic beta subunits, are sandwiched by two outer rings, each composed of seven alpha subunits. The catalytic chamber with the active sites is on the inside of the barrel. Has a gated structure, the ends of the cylinder being occluded by the N-termini of the alpha-subunits. Is capped by the proteasome-associated ATPase, ARC.

The protein resides in the cytoplasm. It carries out the reaction Cleavage of peptide bonds with very broad specificity.. Its pathway is protein degradation; proteasomal Pup-dependent pathway. Its activity is regulated as follows. The formation of the proteasomal ATPase ARC-20S proteasome complex, likely via the docking of the C-termini of ARC into the intersubunit pockets in the alpha-rings, may trigger opening of the gate for substrate entry. Interconversion between the open-gate and close-gate conformations leads to a dynamic regulation of the 20S proteasome proteolysis activity. In terms of biological role, component of the proteasome core, a large protease complex with broad specificity involved in protein degradation. This Thermomonospora curvata (strain ATCC 19995 / DSM 43183 / JCM 3096 / KCTC 9072 / NBRC 15933 / NCIMB 10081 / Henssen B9) protein is Proteasome subunit beta 1.